The chain runs to 397 residues: Ribosomal RNA large subunit methyltransferase I (397 aa).

The region spanning 2–82 (TTSIYLVKGR…EVINVDFFVK (81 aa)) is the PUA domain.

The protein belongs to the methyltransferase superfamily. RlmI family.

The protein localises to the cytoplasm. It carries out the reaction cytidine(1962) in 23S rRNA + S-adenosyl-L-methionine = 5-methylcytidine(1962) in 23S rRNA + S-adenosyl-L-homocysteine + H(+). Its function is as follows. Specifically methylates the cytosine at position 1962 (m5C1962) of 23S rRNA. The sequence is that of Ribosomal RNA large subunit methyltransferase I from Photobacterium profundum (strain SS9).